The sequence spans 1122 residues: Cytosolic carboxypeptidase 4 (1122 aa).

Residues P287–G338 are disordered. A compositionally biased stretch (acidic residues) spans T299–K313. One can recognise a Peptidase M14 domain in the interval Y731–E1021. Positions 803, 806, and 900 each coordinate Zn(2+). Catalysis depends on E985, which acts as the Proton donor/acceptor. The disordered stretch occupies residues C1099 to T1122.

This sequence belongs to the peptidase M14 family. In terms of assembly, interacts with MYLK. Interacts with TCF4. It depends on Zn(2+) as a cofactor. Widely expressed at low level. Expressed in eye, muscle, pituitary, testis and to a lower extent in brain.

The protein resides in the cytoplasm. It is found in the cytosol. It catalyses the reaction (L-glutamyl)(n+1)-gamma-L-glutamyl-L-glutamyl-[protein] + H2O = (L-glutamyl)(n)-gamma-L-glutamyl-L-glutamyl-[protein] + L-glutamate. The enzyme catalyses C-terminal L-alpha-aminoacyl-L-glutamyl-L-glutamyl-[tubulin] + H2O = C-terminal L-alpha-aminoacyl-L-glutamyl-[tubulin] + L-glutamate. Metallocarboxypeptidase that mediates deglutamylation of tubulin and non-tubulin target proteins. Catalyzes the removal of polyglutamate side chains present on the gamma-carboxyl group of glutamate residues within the C-terminal tail of tubulin protein. Specifically cleaves tubulin long-side-chains, while it is not able to remove the branching point glutamate. Also catalyzes the removal of polyglutamate residues from the carboxy-terminus of non-tubulin proteins such as MYLK. In Mus musculus (Mouse), this protein is Cytosolic carboxypeptidase 4.